A 351-amino-acid chain; its full sequence is UDP-glucose 4-epimerase 5 (351 aa).

NAD(+) contacts are provided by residues 13–15 (GYI), 34–38 (DNLDN), 64–65 (DL), F86, and K90. 130 to 132 (SAT) serves as a coordination point for substrate. The active-site Proton acceptor is Y154. 2 residues coordinate NAD(+): K158 and Y182. Substrate contacts are provided by residues 182 to 184 (YFN), 203 to 205 (NNL), 221 to 223 (TVF), R236, and 298 to 301 (RPGD).

This sequence belongs to the NAD(P)-dependent epimerase/dehydratase family. As to quaternary structure, forms homodimers and heterodimers. NAD(+) is required as a cofactor. Widely expressed.

The enzyme catalyses UDP-alpha-D-glucose = UDP-alpha-D-galactose. It functions in the pathway carbohydrate metabolism; galactose metabolism. Enhanced activity by NaCl. Inhibited by UDP. Functionally, catalyzes the interconversion between UDP-glucose and UDP-galactose. In Arabidopsis thaliana (Mouse-ear cress), this protein is UDP-glucose 4-epimerase 5.